A 227-amino-acid chain; its full sequence is Cleavage and polyadenylation specificity factor subunit 5 (227 aa).

Serine 2 carries the N-acetylserine modification. The tract at residues 2–147 (SVVPPNRSQT…DWVIDDCIGN (146 aa)) is necessary for RNA-binding. Arginine 15 carries the post-translational modification Omega-N-methylarginine. An N6-acetyllysine mark is found at lysine 23 and lysine 29. At tyrosine 40 the chain carries Phosphotyrosine. Lysine 56 carries the post-translational modification N6-acetyllysine. Residues 76-201 (MRRTVEGVLI…KLVAAPLFEL (126 aa)) enclose the Nudix hydrolase domain. Residues 81 to 160 (EGVLIVHEHR…PNFEPPQYPY (80 aa)) form a necessary for interactions with PAPOLA and PABPN1 region. The segment at 102 to 104 (TFF) is interaction with RNA. Residues 109–130 (GELNPGEDEVEGLKRLMTEILG) carry the Nudix box motif.

Belongs to the Nudix hydrolase family. CPSF5 subfamily. Homodimer (via N- and C-terminus); binds RNA as homodimer. Component of the cleavage factor Im (CFIm) complex which is a heterotetramer composed of two subunits of NUDT21/CPSF5 and two subunits of CPSF6 or CPSF7 or a heterodimer of CPSF6 and CPSF7. The cleavage factor Im (CFIm) complex associates with the CPSF and CSTF complexes to promote the assembly of the core mRNA 3'-processing machinery. Interacts with CPSF6 (via the RRM domain); this interaction is direct and enhances binding to RNA. Interacts with CPSF7. Interacts with FIP1L1; this interaction occurs in a RNA sequence-specific manner. Interacts with PABPN1. Interacts (via N-terminus) with PAPOLA (via C-terminus); this interaction is direct and diminished by acetylation. Interacts with SNRNP70. Interacts with VIRMA. Post-translationally, acetylated mainly by p300/CBP, recruited to the complex by CPSF6. Acetylation decreases interaction with PAPAO. Deacetylated by the class I/II HDACs, HDAC1, HDAC3 and HDAC10, and by the class III HDACs, SIRT1 and SIRT2.

It localises to the nucleus. It is found in the cytoplasm. In terms of biological role, component of the cleavage factor Im (CFIm) complex that functions as an activator of the pre-mRNA 3'-end cleavage and polyadenylation processing required for the maturation of pre-mRNA into functional mRNAs. CFIm contributes to the recruitment of multiprotein complexes on specific sequences on the pre-mRNA 3'-end, so called cleavage and polyadenylation signals (pA signals). Most pre-mRNAs contain multiple pA signals, resulting in alternative cleavage and polyadenylation (APA) producing mRNAs with variable 3'-end formation. The CFIm complex acts as a key regulator of cleavage and polyadenylation site choice during APA through its binding to 5'-UGUA-3' elements localized in the 3'-untranslated region (UTR) for a huge number of pre-mRNAs. NUDT21/CPSF5 activates indirectly the mRNA 3'-processing machinery by recruiting CPSF6 and/or CPSF7. Binds to 5'-UGUA-3' elements localized upstream of pA signals that act as enhancers of pre-mRNA 3'-end processing. The homodimer mediates simultaneous sequence-specific recognition of two 5'-UGUA-3' elements within the pre-mRNA. Plays a role in somatic cell fate transitions and pluripotency by regulating widespread changes in gene expression through an APA-dependent function. Binds to chromatin. Binds to, but does not hydrolyze mono- and di-adenosine nucleotides. The protein is Cleavage and polyadenylation specificity factor subunit 5 (NUDT21) of Bos taurus (Bovine).